Consider the following 202-residue polypeptide: Small ribosomal subunit protein uS4c-1 (202 aa).

In terms of domain architecture, S4 RNA-binding spans 90–152; that stretch reads MRLDNIVLRA…NKSRQLIDLN (63 aa).

This sequence belongs to the universal ribosomal protein uS4 family. In terms of assembly, part of the 30S ribosomal subunit. Contacts protein S5. The interaction surface between S4 and S5 is involved in control of translational fidelity.

It is found in the plastid. The protein resides in the chloroplast. In terms of biological role, one of the primary rRNA binding proteins, it binds directly to 16S rRNA where it nucleates assembly of the body of the 30S subunit. Functionally, with S5 and S12 plays an important role in translational accuracy. The sequence is that of Small ribosomal subunit protein uS4c-1 from Cyanidium caldarium (Red alga).